Reading from the N-terminus, the 127-residue chain is Large ribosomal subunit protein bL17 (127 aa).

This sequence belongs to the bacterial ribosomal protein bL17 family. Part of the 50S ribosomal subunit. Contacts protein L32.

The sequence is that of Large ribosomal subunit protein bL17 from Legionella pneumophila (strain Paris).